Consider the following 309-residue polypeptide: GTPase Era (309 aa).

Residues 16 to 186 (HAGFVAIVGK…REQILDALPE (171 aa)) form the Era-type G domain. A G1 region spans residues 24–31 (GKPNVGKS). Residue 24–31 (GKPNVGKS) coordinates GTP. Residues 50–54 (QTTRR) form a G2 region. The tract at residues 71 to 74 (DTPG) is G3. Residues 71–75 (DTPGL) and 133–136 (NKVD) contribute to the GTP site. The tract at residues 133-136 (NKVD) is G4. The segment at 164–166 (LSA) is G5. Residues 217–294 (LREELPYAVA…FLGLEVIVIP (78 aa)) form the KH type-2 domain.

The protein belongs to the TRAFAC class TrmE-Era-EngA-EngB-Septin-like GTPase superfamily. Era GTPase family. Monomer.

It localises to the cytoplasm. It is found in the cell membrane. Functionally, an essential GTPase that binds both GDP and GTP, with rapid nucleotide exchange. Plays a role in 16S rRNA processing and 30S ribosomal subunit biogenesis and possibly also in cell cycle regulation and energy metabolism. The protein is GTPase Era of Deinococcus geothermalis (strain DSM 11300 / CIP 105573 / AG-3a).